We begin with the raw amino-acid sequence, 205 residues long: Methylthioribulose-1-phosphate dehydratase (205 aa).

Zn(2+) is bound by residues His96 and His98.

This sequence belongs to the aldolase class II family. MtnB subfamily. It depends on Zn(2+) as a cofactor.

It carries out the reaction 5-(methylsulfanyl)-D-ribulose 1-phosphate = 5-methylsulfanyl-2,3-dioxopentyl phosphate + H2O. Its pathway is amino-acid biosynthesis; L-methionine biosynthesis via salvage pathway; L-methionine from S-methyl-5-thio-alpha-D-ribose 1-phosphate: step 2/6. Its function is as follows. Catalyzes the dehydration of methylthioribulose-1-phosphate (MTRu-1-P) into 2,3-diketo-5-methylthiopentyl-1-phosphate (DK-MTP-1-P). In Pseudomonas paraeruginosa (strain DSM 24068 / PA7) (Pseudomonas aeruginosa (strain PA7)), this protein is Methylthioribulose-1-phosphate dehydratase.